The sequence spans 106 residues: Tripartite terminase subunit 2 (106 aa).

It belongs to the herpesviridae TRM2 protein family. Associates with TRM1 and TRM3 to form the tripartite terminase complex.

Its subcellular location is the host nucleus. In terms of biological role, component of the molecular motor that translocates viral genomic DNA in empty capsid during DNA packaging. Forms a tripartite terminase complex together with TRM1 and TRM3 in the host cytoplasm. Once the complex reaches the host nucleus, it interacts with the capsid portal vertex. This portal forms a ring in which genomic DNA is translocated into the capsid. The chain is Tripartite terminase subunit 2 from Homo sapiens (Human).